The sequence spans 843 residues: Protein P (843 aa).

Residues 1–177 (MPLSYQHFRK…FCGSPYSWEQ (177 aa)) form a terminal protein domain (TP) region. The interval 178–346 (DLQHGRLVFQ…YCLSHIVNLI (169 aa)) is spacer. Disordered stretches follow at residues 219-249 (RKSR…RIHP) and 290-316 (STSK…RSQS). Over residues 290–299 (STSKGHSSSG) the composition is skewed to polar residues. A polymerase/reverse transcriptase domain (RT) region spans residues 347–690 (EDWGPCAEHG…YMTLYPVARQ (344 aa)). Positions 357–600 (EHRIRTPRTP…YSLNFMGYVI (244 aa)) constitute a Reverse transcriptase domain. 3 residues coordinate Mg(2+): Asp-429, Asp-551, and Asp-552.

Belongs to the hepadnaviridae P protein family.

It catalyses the reaction DNA(n) + a 2'-deoxyribonucleoside 5'-triphosphate = DNA(n+1) + diphosphate. It carries out the reaction Endonucleolytic cleavage to 5'-phosphomonoester.. Activated by host HSP70 and HSP40 in vitro to be able to bind the epsilon loop of the pgRNA. Because deletion of the RNase H region renders the protein partly chaperone-independent, the chaperones may be needed indirectly to relieve occlusion of the RNA-binding site by this domain. Inhibited by several reverse-transcriptase inhibitors: Lamivudine, Adefovir and Entecavir. Functionally, multifunctional enzyme that converts the viral RNA genome into dsDNA in viral cytoplasmic capsids. This enzyme displays a DNA polymerase activity that can copy either DNA or RNA templates, and a ribonuclease H (RNase H) activity that cleaves the RNA strand of RNA-DNA heteroduplexes in a partially processive 3'- to 5'-endonucleasic mode. Neo-synthesized pregenomic RNA (pgRNA) are encapsidated together with the P protein, and reverse-transcribed inside the nucleocapsid. Initiation of reverse-transcription occurs first by binding the epsilon loop on the pgRNA genome, and is initiated by protein priming, thereby the 5'-end of (-)DNA is covalently linked to P protein. Partial (+)DNA is synthesized from the (-)DNA template and generates the relaxed circular DNA (RC-DNA) genome. After budding and infection, the RC-DNA migrates in the nucleus, and is converted into a plasmid-like covalently closed circular DNA (cccDNA). The activity of P protein does not seem to be necessary for cccDNA generation, and is presumably released from (+)DNA by host nuclear DNA repair machinery. The sequence is that of Protein P from Homo sapiens (Human).